We begin with the raw amino-acid sequence, 137 residues long: Small ribosomal subunit protein uS12 (137 aa).

Residue Asp-102 is modified to 3-methylthioaspartic acid.

Belongs to the universal ribosomal protein uS12 family. Part of the 30S ribosomal subunit. Contacts proteins S8 and S17. May interact with IF1 in the 30S initiation complex.

With S4 and S5 plays an important role in translational accuracy. Its function is as follows. Interacts with and stabilizes bases of the 16S rRNA that are involved in tRNA selection in the A site and with the mRNA backbone. Located at the interface of the 30S and 50S subunits, it traverses the body of the 30S subunit contacting proteins on the other side and probably holding the rRNA structure together. The combined cluster of proteins S8, S12 and S17 appears to hold together the shoulder and platform of the 30S subunit. This Mesoplasma florum (strain ATCC 33453 / NBRC 100688 / NCTC 11704 / L1) (Acholeplasma florum) protein is Small ribosomal subunit protein uS12.